We begin with the raw amino-acid sequence, 751 residues long: Lanosterol synthase erg7A (751 aa).

Residues 1–22 (MTGGPIASWRTAAQGHLTPDEN) form a disordered region. One copy of the PFTB 1 repeat lies at 147-189 (ATEIKRYLFARQHPEDGGWGLHIEAHSSVFGTCMNYVALRLIG). Aspartate 481 serves as the catalytic Proton donor. PFTB repeat units lie at residues 508–553 (LKDS…MIGY), 585–625 (KDKA…ASVG), and 634–675 (ARRG…VQTA).

This sequence belongs to the terpene cyclase/mutase family.

It localises to the lipid droplet. The protein resides in the endoplasmic reticulum membrane. It carries out the reaction (S)-2,3-epoxysqualene = lanosterol. Its pathway is steroid metabolism; ergosterol biosynthesis. Lanosterol synthase; part of the third module of ergosterol biosynthesis pathway that includes the late steps of the pathway. ERG7A and ERG7B catalyze the cyclization of (S)-2,3 oxidosqualene to lanosterol, a reaction that forms the sterol core. The third module or late pathway involves the ergosterol synthesis itself through consecutive reactions that mainly occur in the endoplasmic reticulum (ER) membrane. Firstly, the squalene synthase erg9 catalyzes the condensation of 2 farnesyl pyrophosphate moieties to form squalene, which is the precursor of all steroids. Squalene synthase is crucial for balancing the incorporation of farnesyl diphosphate (FPP) into sterol and nonsterol isoprene synthesis. Secondly, squalene is converted into lanosterol by the consecutive action of the squalene epoxidase erg1 and the lanosterol synthase erg7. Then, the delta(24)-sterol C-methyltransferase erg6 methylates lanosterol at C-24 to produce eburicol. Eburicol is the substrate of the sterol 14-alpha demethylase encoded by cyp51A and cyp51B, to yield 4,4,24-trimethyl ergosta-8,14,24(28)-trienol. The C-14 reductase erg24 then reduces the C14=C15 double bond which leads to 4,4-dimethylfecosterol. A sequence of further demethylations at C-4, involving the C-4 demethylation complex containing the C-4 methylsterol oxidases erg25A or erg25B, the sterol-4-alpha-carboxylate 3-dehydrogenase erg26 and the 3-keto-steroid reductase erg27, leads to the production of fecosterol via 4-methylfecosterol. The C-8 sterol isomerase erg2 then catalyzes the reaction which results in unsaturation at C-7 in the B ring of sterols and thus converts fecosterol to episterol. The sterol-C5-desaturase erg3B then catalyzes the introduction of a C-5 double bond in the B ring to produce 5-dehydroepisterol. The 2 other sterol-C5-desaturases, erg3A and erg3C, seem to be less important in ergosterol biosynthesis. The C-22 sterol desaturase erg5 further converts 5-dehydroepisterol into ergosta-5,7,22,24(28)-tetraen-3beta-ol by forming the C-22(23) double bond in the sterol side chain. Finally, ergosta-5,7,22,24(28)-tetraen-3beta-ol is substrate of the C-24(28) sterol reductases erg4A and erg4B to produce ergosterol. Possible alternative sterol biosynthetic pathways might exist from fecosterol to ergosterol, depending on the activities of the erg3 isoforms. This chain is Lanosterol synthase erg7A, found in Aspergillus fumigatus (strain ATCC MYA-4609 / CBS 101355 / FGSC A1100 / Af293) (Neosartorya fumigata).